A 283-amino-acid polypeptide reads, in one-letter code: Nickel/cobalt efflux system RcnA (283 aa).

The Periplasmic portion of the chain corresponds to 1 to 12; sequence MTEFTTLLQQGN. A helical transmembrane segment spans residues 13-33; the sequence is AWFFIPSAILLGALHGLEPGH. Topologically, residues 34-56 are cytoplasmic; that stretch reads SKTMMAAFIIAIKGTIKQAVMLG. Residues 57–77 traverse the membrane as a helical segment; that stretch reads LAATISHTAVVWLIAFGGMVI. Over 78 to 86 the chain is Periplasmic; it reads SKRFTAQSA. A helical membrane pass occupies residues 87–107; it reads EPWLQLISAVIIISTAFWMFW. Residues 108–184 lie on the Cytoplasmic side of the membrane; the sequence is RTWRGERNWL…DGREVTNWQI (77 aa). The segment at 127 to 162 is disordered; the sequence is DHEHHQDHDHDHDHDHDHEHHHHHEHGDNEEYQDAH. Basic and acidic residues-rich tracts occupy residues 129–144 and 151–162; these read EHHQ…DHDH and EHGDNEEYQDAH. The chain crosses the membrane as a helical span at residues 185 to 205; sequence LLFGLTGGLIPCPAAITVLLI. At 206-218 the chain is on the periplasmic side; it reads CIQLKALTLGATL. Residues 219–239 form a helical membrane-spanning segment; sequence VVSFSIGLALTLVTVGVGAAI. At 240–260 the chain is on the cytoplasmic side; the sequence is SVQQVAKRWSGFNTLAKRAPY. The chain crosses the membrane as a helical span at residues 261 to 281; that stretch reads FSSLLIGLVGVYMGVHGFMGI. Residues 282–283 are Periplasmic-facing; sequence MR.

The protein belongs to the NiCoT transporter (TC 2.A.52) family. RcnA subfamily.

Its subcellular location is the cell inner membrane. Functionally, efflux system for nickel and cobalt. This chain is Nickel/cobalt efflux system RcnA (rcnA), found in Escherichia coli O157:H7.